Reading from the N-terminus, the 443-residue chain is Differentially expressed in FDCP 8 homolog A (443 aa).

Positions 1-49 are disordered; that stretch reads MEYDDKLVRFRQGHLNPFDKQGGAERHPADSEAQPPKDSSTISPHSIPE. Phorbol-ester/DAG-type zinc fingers lie at residues 134–185 and 364–424; these read EHRF…TKPC and IHTT…STSC.

Belongs to the DEF8 family.

Functionally, positively regulates lysosome peripheral distribution and ruffled border formation in osteoclasts. Involved in bone resorption. The protein is Differentially expressed in FDCP 8 homolog A (def8-a) of Xenopus laevis (African clawed frog).